Reading from the N-terminus, the 128-residue chain is MSKPFYVRFEVPPELAEKAYEALRKARESGGKIKKGTNETTKAVDKGLAKLVLIAEDVDPPEIVAHLPLLCEEKKIPYVYVPSKKKLGEAAGIEVQAAAAAIIDPGAAKDLVEEIIKEVEQIKAKAGL.

Belongs to the eukaryotic ribosomal protein eL8 family. Part of the 50S ribosomal subunit. Probably part of the RNase P complex.

It is found in the cytoplasm. In terms of biological role, multifunctional RNA-binding protein that recognizes the K-turn motif in ribosomal RNA, the RNA component of RNase P, box H/ACA, box C/D and box C'/D' sRNAs. In Ignicoccus hospitalis (strain KIN4/I / DSM 18386 / JCM 14125), this protein is Large ribosomal subunit protein eL8.